Here is a 322-residue protein sequence, read N- to C-terminus: Lipoyl synthase (322 aa).

Positions 1–14 (MKTLDENQAPSRQT) are enriched in polar residues. Positions 1-30 (MKTLDENQAPSRQTPESHRRGAEKLSRIPV) are disordered. Positions 15–26 (PESHRRGAEKLS) are enriched in basic and acidic residues. [4Fe-4S] cluster is bound by residues C70, C75, C81, C96, C100, C103, and S310. Positions 82-299 (FGHGTATFMI…AGYARELGFA (218 aa)) constitute a Radical SAM core domain.

The protein belongs to the radical SAM superfamily. Lipoyl synthase family. The cofactor is [4Fe-4S] cluster.

Its subcellular location is the cytoplasm. The enzyme catalyses [[Fe-S] cluster scaffold protein carrying a second [4Fe-4S](2+) cluster] + N(6)-octanoyl-L-lysyl-[protein] + 2 oxidized [2Fe-2S]-[ferredoxin] + 2 S-adenosyl-L-methionine + 4 H(+) = [[Fe-S] cluster scaffold protein] + N(6)-[(R)-dihydrolipoyl]-L-lysyl-[protein] + 4 Fe(3+) + 2 hydrogen sulfide + 2 5'-deoxyadenosine + 2 L-methionine + 2 reduced [2Fe-2S]-[ferredoxin]. Its pathway is protein modification; protein lipoylation via endogenous pathway; protein N(6)-(lipoyl)lysine from octanoyl-[acyl-carrier-protein]: step 2/2. Its function is as follows. Catalyzes the radical-mediated insertion of two sulfur atoms into the C-6 and C-8 positions of the octanoyl moiety bound to the lipoyl domains of lipoate-dependent enzymes, thereby converting the octanoylated domains into lipoylated derivatives. The polypeptide is Lipoyl synthase (Methylococcus capsulatus (strain ATCC 33009 / NCIMB 11132 / Bath)).